Consider the following 115-residue polypeptide: Probable prefoldin subunit 1 (115 aa).

Belongs to the prefoldin subunit beta family. Heterohexamer of two PFD-alpha type and four PFD-beta type subunits.

Its function is as follows. Binds specifically to cytosolic chaperonin (c-CPN) and transfers target proteins to it. Binds to nascent polypeptide chain and promotes folding in an environment in which there are many competing pathways for nonnative proteins. This is Probable prefoldin subunit 1 (pfdn1) from Dictyostelium discoideum (Social amoeba).